The following is a 203-amino-acid chain: Urease accessory protein UreG (203 aa).

Residue 11 to 18 (GPVGSGKT) participates in GTP binding.

This sequence belongs to the SIMIBI class G3E GTPase family. UreG subfamily. Homodimer. UreD, UreF and UreG form a complex that acts as a GTP-hydrolysis-dependent molecular chaperone, activating the urease apoprotein by helping to assemble the nickel containing metallocenter of UreC. The UreE protein probably delivers the nickel.

Its subcellular location is the cytoplasm. Its function is as follows. Facilitates the functional incorporation of the urease nickel metallocenter. This process requires GTP hydrolysis, probably effectuated by UreG. The sequence is that of Urease accessory protein UreG from Prochlorococcus marinus (strain MIT 9215).